Reading from the N-terminus, the 84-residue chain is Serine palmitoyltransferase-regulating protein TSC3 (84 aa).

Residues 63–83 traverse the membrane as a helical segment; sequence LHTIFLVVVSLSLFGLLKYIF.

It localises to the endoplasmic reticulum membrane. Stimulates the activity of serine palmitoyltransferase (SPT), and thus plays a role in the biosynthesis of sphingolipids. The polypeptide is Serine palmitoyltransferase-regulating protein TSC3 (TSC3) (Kluyveromyces lactis (strain ATCC 8585 / CBS 2359 / DSM 70799 / NBRC 1267 / NRRL Y-1140 / WM37) (Yeast)).